A 168-amino-acid chain; its full sequence is Protein DESIGUAL 2 (168 aa).

Positions 1-20 are cleaved as a signal peptide; the sequence is MARNVGFFICILILAMDVSA. 3 helical membrane passes run 56-76, 94-114, and 133-153; these read LAAC…GGCL, AVAS…MLIV, and VLSI…AYYI.

It belongs to the DESIGUAL family. In terms of tissue distribution, mainly expressed in roots, inflorescences and developing leaves, and, at low levels, in mature leaves.

The protein localises to the endoplasmic reticulum membrane. Its function is as follows. Involved, partially redundantly with VCC/DEAL1 and DEAL3, to ensure bilateral symmetry development and early leaf margin patterning, probably via the regulation of auxin and CUC2 distribution. This Arabidopsis thaliana (Mouse-ear cress) protein is Protein DESIGUAL 2.